Here is a 156-residue protein sequence, read N- to C-terminus: Small ribosomal subunit protein uS7c (156 aa).

This sequence belongs to the universal ribosomal protein uS7 family. In terms of assembly, part of the 30S ribosomal subunit.

The protein resides in the plastid. Its subcellular location is the chloroplast. Functionally, one of the primary rRNA binding proteins, it binds directly to 16S rRNA where it nucleates assembly of the head domain of the 30S subunit. This Chlorella vulgaris (Green alga) protein is Small ribosomal subunit protein uS7c (rps7).